A 349-amino-acid chain; its full sequence is Nucleoporin SEH1 (349 aa).

5 WD repeats span residues 7–46 (GHDDLVHDVVYDFYGRHVATCSSDQHIKVFKLDKDTSNWE), 53–94 (AHDS…EECS), 106–147 (DSKG…DLRS), 153–192 (EMKVLSIPPANHLQSDFCLSWCPSRFSPEKLAVSALEQAI), and 210–253 (GHKS…SPLA). Ser257 carries the post-translational modification Phosphoserine. Residues 263 to 285 (MFDNSADVDMDAQGRSDSNTEEK) are disordered. The segment covering 274–285 (AQGRSDSNTEEK) has biased composition (basic and acidic residues). The stretch at 302–341 (DHNGEVWSVSWNLTGTILSSAGDDGKVRLWKATYSNEFKC) is one WD 6 repeat.

It belongs to the WD repeat SEC13 family. In terms of assembly, component of the nuclear pore complex (NPC). NPC constitutes the exclusive means of nucleocytoplasmic transport. NPCs allow the passive diffusion of ions and small molecules and the active, nuclear transport receptor-mediated bidirectional transport of macromolecules such as proteins, RNAs, ribonucleoparticles (RNPs), and ribosomal subunits across the nuclear envelope. Due to its 8-fold rotational symmetry, all subunits are present with 8 copies or multiples thereof. SEH1 is part of the heptameric 0.5 MDa autoassembling NUP84 NPC subcomplex (NUP84, NUP85, NUP120, NUP133, NUP145C, SEC13 and SEH1). Component of the SEA complex composed of at least IML1/SEA1, RTC1/SEA2, MTC5/SEA3, NPR2, NPR3, SEA4, SEC13 and SEH1.

The protein localises to the nucleus. Its subcellular location is the nuclear pore complex. The protein resides in the nucleus membrane. It is found in the vacuole membrane. In terms of biological role, functions as a component of the nuclear pore complex (NPC). NPC components, collectively referred to as nucleoporins (NUPs), can play the role of both NPC structural components and of docking or interaction partners for transiently associated nuclear transport factors. Involved in nuclear poly(A)+ RNA export and NPC biogenesis. It is also required for normal nuclear morphology. Component of the SEA complex which coats the vacuolar membrane and is involved in intracellular trafficking, autophagy, response to nitrogen starvation, and amino acid biogenesis. The polypeptide is Nucleoporin SEH1 (SEH1) (Saccharomyces cerevisiae (strain ATCC 204508 / S288c) (Baker's yeast)).